The sequence spans 117 residues: Large ribosomal subunit protein bL20 (117 aa).

It belongs to the bacterial ribosomal protein bL20 family.

Its function is as follows. Binds directly to 23S ribosomal RNA and is necessary for the in vitro assembly process of the 50S ribosomal subunit. It is not involved in the protein synthesizing functions of that subunit. The protein is Large ribosomal subunit protein bL20 of Leptospira borgpetersenii serovar Hardjo-bovis (strain JB197).